Reading from the N-terminus, the 235-residue chain is Post-translational flagellin modification protein B (235 aa).

The protein belongs to the CMP-NeuNAc synthase family.

In terms of biological role, required for biosynthesis of LAH modification in the post-translational modification of Campylobacter coli flagellin. The sequence is that of Post-translational flagellin modification protein B (ptmB) from Campylobacter coli.